A 335-amino-acid chain; its full sequence is Polyprenol dehydrogenase (335 aa).

The NAD(+) site is built by Ile-55, Tyr-208, Lys-212, and Thr-245. Residue Tyr-208 is the Proton acceptor of the active site.

Belongs to the short-chain dehydrogenases/reductases (SDR) family.

The protein resides in the lipid droplet. It is found in the secreted. The catalysed reaction is a di-trans,poly-cis-polyprenol + NAD(+) = a di-trans,poly-cis-polyprenal + NADH + H(+). It catalyses the reaction a di-trans,poly-cis-polyprenol + NADP(+) = a di-trans,poly-cis-polyprenal + NADPH + H(+). It carries out the reaction a di-trans,poly-cis-dolichol + NADP(+) = a di-trans,poly-cis-dolichal + NADPH + H(+). The enzyme catalyses a di-trans,poly-cis-dolichol + NAD(+) = a di-trans,poly-cis-dolichal + NADH + H(+). Its pathway is protein modification; protein glycosylation. Oxidoreductase that plays a key role in early steps of protein N-linked glycosylation by mediating two non-consecutive steps in dolichol biosynthesis. Acts both as a NAD(+)-dependent dehydrogenase and as a NADPH-dependent reductase during the conversion of polyprenol into dolichol. First catalyzes the NAD(+)-dependent dehydrogenation of polyprenol into polyprenal; polyprenal is then reduced into dolichal by SRD5A3. It then catalyzes the NADPH-dependent reduction of dolichal into dolichol. May also acts as a positive regulator of starvation-induced autophagy. The sequence is that of Polyprenol dehydrogenase (Dhrsx) from Mus musculus (Mouse).